Reading from the N-terminus, the 347-residue chain is MFPIFDPIAFGLYLLGYIVMIIVAVVIAPKVASSISGRFTLYGAMALTAVLIVLTTAFVIYLIAIVAAPALAEYGWGFILGMIFFVVLMNLITYIASPFLINVTYGARPDPRLQEIVDAVASRLGAPFRIKAVVVDGPPNAFAYGNFLTGRYVAVTSSMLALTDKRELEAVIGHEIGHHLHRDNALMLLFGVLPSILYYLGVSSVRIALSSSNNRNNNTMLLAAVGILAVVVSFLVQLLVLAFSRLREYYADTAGAKAAGKEAMQFALAKIHKFYFSNPEAHEIISGDKFRALFIYALVNAVANPFITVTRSEIEEIKRSSYSVIQEIFSTHPPIPKRLRFLDQLQI.

The next 3 membrane-spanning stretches (helical) occupy residues 8-28 (IAFG…VVIA), 46-66 (ALTA…IAIV), and 76-96 (WGFI…TYIA). H174 is a binding site for Zn(2+). Residue E175 is part of the active site. Residue H178 coordinates Zn(2+). 2 helical membrane-spanning segments follow: residues 185–205 (ALML…VSSV) and 221–241 (LLAA…LLVL). E248 serves as a coordination point for Zn(2+).

This sequence belongs to the peptidase M48B family. Zn(2+) serves as cofactor.

The protein localises to the cell membrane. This Pyrobaculum islandicum (strain DSM 4184 / JCM 9189 / GEO3) protein is Protease HtpX homolog.